A 627-amino-acid chain; its full sequence is uncharacterized protein (627 aa).

In terms of domain architecture, WH1 spans 21–136 (GISASDKILS…NSVCKRQTRS (116 aa)). The interval 310 to 347 (RGSLSTPRIPTHRDSYRSATKPDTVPKQTPPPTHNSYV) is disordered.

This is an uncharacterized protein from Caenorhabditis elegans.